The chain runs to 290 residues: Bifunctional protein FolD 1 (290 aa).

NADP(+)-binding positions include 172 to 174 (GAS) and I238.

It belongs to the tetrahydrofolate dehydrogenase/cyclohydrolase family. Homodimer.

The enzyme catalyses (6R)-5,10-methylene-5,6,7,8-tetrahydrofolate + NADP(+) = (6R)-5,10-methenyltetrahydrofolate + NADPH. The catalysed reaction is (6R)-5,10-methenyltetrahydrofolate + H2O = (6R)-10-formyltetrahydrofolate + H(+). It functions in the pathway one-carbon metabolism; tetrahydrofolate interconversion. Catalyzes the oxidation of 5,10-methylenetetrahydrofolate to 5,10-methenyltetrahydrofolate and then the hydrolysis of 5,10-methenyltetrahydrofolate to 10-formyltetrahydrofolate. The chain is Bifunctional protein FolD 1 from Pseudomonas putida (strain GB-1).